Here is a 244-residue protein sequence, read N- to C-terminus: Chlorosome protein I (244 aa).

Residues 1-95 (MNLIINDKTA…TVKVLSRPEE (95 aa)) enclose the 2Fe-2S ferredoxin-type domain. [2Fe-2S] cluster contacts are provided by Cys33, Cys39, Cys42, and Cys77.

It depends on [2Fe-2S] cluster as a cofactor.

The protein localises to the chlorosome. In terms of biological role, could play a direct role in the oxidation or reduction of the quenching species formed in the chlorosome. The sequence is that of Chlorosome protein I (csmI) from Chlorobaculum tepidum (strain ATCC 49652 / DSM 12025 / NBRC 103806 / TLS) (Chlorobium tepidum).